The following is a 196-amino-acid chain: Segregation and condensation protein B (196 aa).

The protein belongs to the ScpB family. Homodimer. Homodimerization may be required to stabilize the binding of ScpA to the Smc head domains. Component of a cohesin-like complex composed of ScpA, ScpB and the Smc homodimer, in which ScpA and ScpB bind to the head domain of Smc. The presence of the three proteins is required for the association of the complex with DNA.

It localises to the cytoplasm. Participates in chromosomal partition during cell division. May act via the formation of a condensin-like complex containing Smc and ScpA that pull DNA away from mid-cell into both cell halves. The sequence is that of Segregation and condensation protein B from Pediococcus pentosaceus (strain ATCC 25745 / CCUG 21536 / LMG 10740 / 183-1w).